The chain runs to 180 residues: Transcription factor HES-7.1-A (180 aa).

Residues 13–70 (HRKLLKPLVEKRRRERINNSLEKLRIFLFQTLKSEKLKNPKVEKAEILECTVQFLQSR) enclose the bHLH domain. In terms of domain architecture, Orange spans 84 to 116 (YQSGFQHCLETTLHFMNSKPDMNGVTKELLSHQ). Positions 176–179 (WRPW) match the WRPW motif motif.

As to quaternary structure, transcription repression requires formation of a complex with a corepressor protein of the Groucho/TLE family. As to expression, expressed in the presumptive midbrain-hindbrain boundary (MHB) as early as the early gastrula stage (stage 10.5). Expression in the MHB continues through to tailbud stage. Also transiently expressed in the eye anlage at late neurula stage.

Its subcellular location is the nucleus. In terms of biological role, transcriptional repressor. Represses transcription from both N box- and E box-containing promoters. Demarcates the prospective midbrain-hindbrain boundary (MHB) region in the neuroectoderm in early gastrulae embryos by repressing transcription of a number of target genes. The chain is Transcription factor HES-7.1-A (hes7.1-a) from Xenopus laevis (African clawed frog).